An 888-amino-acid polypeptide reads, in one-letter code: Lon protease homolog 2, peroxisomal (888 aa).

Positions 11 to 255 constitute a Lon N-terminal domain; sequence LAILPFRNKV…KATELVDRHL (245 aa). Position 408-415 (408-415) interacts with ATP; that stretch reads GPPGVGKT. The Lon proteolytic domain occupies 692–877; sequence VASAGVSVGL…EDVLENAFEG (186 aa). Catalysis depends on residues S783 and K826. A Microbody targeting signal motif is present at residues 886–888; it reads SKL.

This sequence belongs to the peptidase S16 family.

The protein localises to the peroxisome matrix. It carries out the reaction Hydrolysis of proteins in presence of ATP.. ATP-dependent serine protease that mediates the selective degradation of misfolded and unassembled polypeptides in the peroxisomal matrix. Necessary for type 2 peroxisome targeting signal (PTS2)-containing protein processing and facilitates peroxisome matrix protein import. This is Lon protease homolog 2, peroxisomal (LON2) from Arabidopsis thaliana (Mouse-ear cress).